The sequence spans 463 residues: ATP-dependent rRNA helicase SPB4 (463 aa).

The short motif at 4–32 (KGIEDVAMNGRLKKEIEENGFGKMTEVQL) is the Q motif element. Residues 35–205 (IPEVLKGKDV…RVFLRNPVSI (171 aa)) enclose the Helicase ATP-binding domain. 48–55 (SPTGTGKT) contributes to the ATP binding site. Residues 153–156 (DEAD) carry the DEAD box motif. One can recognise a Helicase C-terminal domain in the interval 226–382 (KLLVLMDIVT…DIKSMISPEL (157 aa)). The segment at 444–463 (RDGKKRALPKKKYRKKRAIK) is disordered. The span at 446 to 463 (GKKRALPKKKYRKKRAIK) shows a compositional bias: basic residues.

Belongs to the DEAD box helicase family. DDX55/SPB4 subfamily. As to quaternary structure, component of pre-60S ribosomal complexes.

The protein localises to the nucleus. Its subcellular location is the nucleolus. It carries out the reaction ATP + H2O = ADP + phosphate + H(+). In terms of biological role, ATP-binding RNA helicase involved in the biogenesis of 60S ribosomal subunits. Binds 90S pre-ribosomal particles and dissociates from pre-60S ribosomal particles after processing of 27SB pre-rRNA. Required for the normal formation of 18S rRNA through the processing of pre-rRNAs at sites A0, A1 and A2, and the normal formation of 25S and 5.8S rRNAs through the processing of pre-rRNAs at sites C1 and C2. In Encephalitozoon cuniculi (strain GB-M1) (Microsporidian parasite), this protein is ATP-dependent rRNA helicase SPB4.